The sequence spans 457 residues: ATP synthase subunit beta (457 aa).

147-154 contacts ATP; the sequence is GGAGVGKT.

It belongs to the ATPase alpha/beta chains family. As to quaternary structure, F-type ATPases have 2 components, CF(1) - the catalytic core - and CF(0) - the membrane proton channel. CF(1) has five subunits: alpha(3), beta(3), gamma(1), delta(1), epsilon(1). CF(0) has three main subunits: a(1), b(2) and c(9-12). The alpha and beta chains form an alternating ring which encloses part of the gamma chain. CF(1) is attached to CF(0) by a central stalk formed by the gamma and epsilon chains, while a peripheral stalk is formed by the delta and b chains.

It localises to the cell inner membrane. The enzyme catalyses ATP + H2O + 4 H(+)(in) = ADP + phosphate + 5 H(+)(out). Its function is as follows. Produces ATP from ADP in the presence of a proton gradient across the membrane. The catalytic sites are hosted primarily by the beta subunits. This is ATP synthase subunit beta from Haemophilus influenzae (strain PittGG).